A 319-amino-acid chain; its full sequence is Ferrochelatase (319 aa).

Fe cation contacts are provided by His192 and Glu271.

Belongs to the ferrochelatase family.

It localises to the cytoplasm. It catalyses the reaction heme b + 2 H(+) = protoporphyrin IX + Fe(2+). Its pathway is porphyrin-containing compound metabolism; protoheme biosynthesis; protoheme from protoporphyrin-IX: step 1/1. Its function is as follows. Catalyzes the ferrous insertion into protoporphyrin IX. In Geotalea uraniireducens (strain Rf4) (Geobacter uraniireducens), this protein is Ferrochelatase.